The sequence spans 363 residues: ADP-ribosylhydrolase ARH3 (363 aa).

Mg(2+) is bound at residue E41. T64 carries the phosphothreonine modification. Mg(2+)-binding residues include T76, D77, and D78. Substrate is bound at residue D77. Substrate contacts are provided by residues K146–G152, H182, L235, and I271. Residues D314, D316, and T317 each coordinate Mg(2+).

This sequence belongs to the ADP-ribosylglycohydrolase family. As to quaternary structure, monomer. Mg(2+) serves as cofactor. As to expression, ubiquitous. Expressed in skin fibroblasts.

It localises to the nucleus. The protein resides in the cytoplasm. It is found in the chromosome. Its subcellular location is the mitochondrion matrix. The catalysed reaction is [(1''-&gt;2')-ADP-alpha-D-ribose](n) + H2O = [(1''-&gt;2')-ADP-alpha-D-ribose](n-1) + ADP-D-ribose. It catalyses the reaction 1''-O-acetyl-ADP-alpha-D-ribose + H2O = ADP-D-ribose + acetate + H(+). It carries out the reaction O-(ADP-D-ribosyl)-L-seryl-[protein] + H2O = ADP-D-ribose + L-seryl-[protein]. The enzyme catalyses alpha-NAD(+) + H2O = ADP-D-ribose + nicotinamide + H(+). With respect to regulation, the protein undergoes a dramatic conformational switch from closed to open states upon substrate-binding, which enables specific substrate recognition for the 1''-O-linkage. The glutamate flap (Glu-41) blocks substrate entrance to Mg(2+) in the unliganded closed state. In presence of substrate, Glu-41 is ejected from the active site: this closed-to-open transition significantly widens the substrate-binding channel and precisely positions the scissile 1''-O-linkage for cleavage while securing tightly 2'- and 3'-hydroxyls of ADP-ribose. Its function is as follows. ADP-ribosylhydrolase that preferentially hydrolyzes the scissile alpha-O-linkage attached to the anomeric C1'' position of ADP-ribose and acts on different substrates, such as proteins ADP-ribosylated on serine and threonine, free poly(ADP-ribose) and O-acetyl-ADP-D-ribose. Specifically acts as a serine mono-ADP-ribosylhydrolase by mediating the removal of mono-ADP-ribose attached to serine residues on proteins, thereby playing a key role in DNA damage response. Serine ADP-ribosylation of proteins constitutes the primary form of ADP-ribosylation of proteins in response to DNA damage. Does not hydrolyze ADP-ribosyl-arginine, -cysteine, -diphthamide, or -asparagine bonds. Also able to degrade protein free poly(ADP-ribose), which is synthesized in response to DNA damage: free poly(ADP-ribose) acts as a potent cell death signal and its degradation by ADPRHL2 protects cells from poly(ADP-ribose)-dependent cell death, a process named parthanatos. Also hydrolyzes free poly(ADP-ribose) in mitochondria. Specifically digests O-acetyl-ADP-D-ribose, a product of deacetylation reactions catalyzed by sirtuins. Specifically degrades 1''-O-acetyl-ADP-D-ribose isomer, rather than 2''-O-acetyl-ADP-D-ribose or 3''-O-acetyl-ADP-D-ribose isomers. The sequence is that of ADP-ribosylhydrolase ARH3 from Homo sapiens (Human).